Reading from the N-terminus, the 202-residue chain is Sperm-specific H1/protamine-like protein type 1 (202 aa).

Positions 1 to 35 (MPSPSRKSRSRSRSRSKSPKRSPAKKARKTPKKPR) are enriched in basic residues. Disordered stretches follow at residues 1 to 46 (MPSP…PTTL) and 104 to 202 (KTSA…QFAL). Residues 41–120 (KKPTTLSMIV…GATGSFRVGK (80 aa)) enclose the H15 domain. Positions 126 to 156 (KKAKKAKSPKKKSSKKSKNKSNNAKAKKSPK) are enriched in basic residues. Low complexity predominate over residues 177 to 187 (GARYPFRYQAY).

In terms of processing, OE1 and OE3 are produced by post-translational cleavage of a common precursor. As to expression, sperm.

The protein localises to the nucleus. Its subcellular location is the chromosome. In terms of biological role, linker histones are implicated in chromatin remodeling and/or transcriptional regulation during spermiogenesis, the process of spermatid maturation into spermatozoa. Protamines substitute for histones in the chromatin of sperm during the haploid phase of spermatogenesis. They compact sperm DNA into a highly condensed, stable and inactive complex. This Ostrea edulis (Native oyster) protein is Sperm-specific H1/protamine-like protein type 1.